The primary structure comprises 233 residues: Demethylmenaquinone methyltransferase (233 aa).

Residues threonine 58, aspartate 79, and 106 to 107 contribute to the S-adenosyl-L-methionine site; that span reads NA.

This sequence belongs to the class I-like SAM-binding methyltransferase superfamily. MenG/UbiE family.

The enzyme catalyses a 2-demethylmenaquinol + S-adenosyl-L-methionine = a menaquinol + S-adenosyl-L-homocysteine + H(+). It participates in quinol/quinone metabolism; menaquinone biosynthesis; menaquinol from 1,4-dihydroxy-2-naphthoate: step 2/2. Functionally, methyltransferase required for the conversion of demethylmenaquinol (DMKH2) to menaquinol (MKH2). This chain is Demethylmenaquinone methyltransferase, found in Bacillus subtilis (strain 168).